The sequence spans 575 residues: Amino-acid acetyltransferase, mitochondrial (575 aa).

A mitochondrion-targeting transit peptide spans 1–35 (MSKLRNLNRQFISNLKTHETVTNAKRNLILSILKS). Positions 398 to 557 (FTLNNLVQDG…QGIPGGVNIH (160 aa)) constitute an N-acetyltransferase domain.

This sequence belongs to the acetyltransferase family.

It localises to the mitochondrion. It carries out the reaction L-glutamate + acetyl-CoA = N-acetyl-L-glutamate + CoA + H(+). Its pathway is amino-acid biosynthesis; L-arginine biosynthesis; N(2)-acetyl-L-ornithine from L-glutamate: step 1/4. Functionally, N-acetylglutamate synthase involved in arginine biosynthesis. The sequence is that of Amino-acid acetyltransferase, mitochondrial (ARG2) from Debaryomyces hansenii (strain ATCC 36239 / CBS 767 / BCRC 21394 / JCM 1990 / NBRC 0083 / IGC 2968) (Yeast).